The primary structure comprises 109 residues: Sperm-specific class P protein 9/11 (109 aa).

In terms of domain architecture, MSP spans 2-109 (SLTADPPACT…TVTIPMSATA (108 aa)).

Expressed at higher level in testis.

The sequence is that of Sperm-specific class P protein 9/11 (ssp-9) from Caenorhabditis elegans.